Consider the following 375-residue polypeptide: Protein NDRG3 (375 aa).

Positions 326 to 375 (RSRTHSASSSGSMEIPRSRSHTSNAQLKSSSNNSLSNQIQETPQTIELSC) are disordered. The segment covering 348–363 (SNAQLKSSSNNSLSNQ) has biased composition (low complexity). The span at 364–375 (IQETPQTIELSC) shows a compositional bias: polar residues.

The protein belongs to the NDRG family.

This is Protein NDRG3 from Xenopus laevis (African clawed frog).